Here is a 247-residue protein sequence, read N- to C-terminus: Probable transcriptional regulatory protein ECA2494 (247 aa).

The protein belongs to the TACO1 family.

The protein resides in the cytoplasm. This chain is Probable transcriptional regulatory protein ECA2494, found in Pectobacterium atrosepticum (strain SCRI 1043 / ATCC BAA-672) (Erwinia carotovora subsp. atroseptica).